Here is a 403-residue protein sequence, read N- to C-terminus: Na(+)-translocating NADH-quinone reductase subunit B (403 aa).

4 consecutive transmembrane segments (helical) span residues 56–76 (MMIL…WNTG), 121–141 (AYFL…EVLF), 164–184 (LPPS…VVIG), and 195–212 (FLNP…AYPA). At T230 the chain carries FMN phosphoryl threonine. A run of 6 helical transmembrane segments spans residues 237–257 (AGGV…FLGI), 265–285 (TSTL…IAAW), 287–307 (IVAG…LIGS), 312–332 (MFAM…GTLF), 348–368 (WAFG…NPAF), and 371–391 (GMML…HFVV).

This sequence belongs to the NqrB/RnfD family. In terms of assembly, composed of six subunits; NqrA, NqrB, NqrC, NqrD, NqrE and NqrF. Requires FMN as cofactor.

The protein localises to the cell inner membrane. It catalyses the reaction a ubiquinone + n Na(+)(in) + NADH + H(+) = a ubiquinol + n Na(+)(out) + NAD(+). NQR complex catalyzes the reduction of ubiquinone-1 to ubiquinol by two successive reactions, coupled with the transport of Na(+) ions from the cytoplasm to the periplasm. NqrA to NqrE are probably involved in the second step, the conversion of ubisemiquinone to ubiquinol. The sequence is that of Na(+)-translocating NADH-quinone reductase subunit B from Azotobacter vinelandii (strain DJ / ATCC BAA-1303).